A 206-amino-acid chain; its full sequence is LexA repressor (206 aa).

A DNA-binding region (H-T-H motif) is located at residues 28-48 (RAEIARELGFRSANAAEEHLK). Catalysis depends on for autocatalytic cleavage activity residues Ser-123 and Lys-160.

The protein belongs to the peptidase S24 family. Homodimer.

The enzyme catalyses Hydrolysis of Ala-|-Gly bond in repressor LexA.. Represses a number of genes involved in the response to DNA damage (SOS response), including recA and lexA. In the presence of single-stranded DNA, RecA interacts with LexA causing an autocatalytic cleavage which disrupts the DNA-binding part of LexA, leading to derepression of the SOS regulon and eventually DNA repair. The polypeptide is LexA repressor (Vibrio atlanticus (strain LGP32) (Vibrio splendidus (strain Mel32))).